The primary structure comprises 336 residues: Glyoxylate reductase (336 aa).

Residues 158–161, 180–182, and 239–241 contribute to the NADP(+) site; these read FGRI, SRT, and IAR. Catalysis depends on residues Arg241 and Glu270. His288 (proton donor) is an active-site residue. Residue 288-290 participates in NADP(+) binding; that stretch reads HIG.

It belongs to the D-isomer specific 2-hydroxyacid dehydrogenase family. GyaR subfamily. In terms of assembly, homodimer.

The protein localises to the cytoplasm. It catalyses the reaction glycolate + NAD(+) = glyoxylate + NADH + H(+). The polypeptide is Glyoxylate reductase (Pyrococcus furiosus (strain ATCC 43587 / DSM 3638 / JCM 8422 / Vc1)).